We begin with the raw amino-acid sequence, 95 residues long: Aspartyl/glutamyl-tRNA(Asn/Gln) amidotransferase subunit C (95 aa).

The protein belongs to the GatC family. In terms of assembly, heterotrimer of A, B and C subunits.

It carries out the reaction L-glutamyl-tRNA(Gln) + L-glutamine + ATP + H2O = L-glutaminyl-tRNA(Gln) + L-glutamate + ADP + phosphate + H(+). It catalyses the reaction L-aspartyl-tRNA(Asn) + L-glutamine + ATP + H2O = L-asparaginyl-tRNA(Asn) + L-glutamate + ADP + phosphate + 2 H(+). In terms of biological role, allows the formation of correctly charged Asn-tRNA(Asn) or Gln-tRNA(Gln) through the transamidation of misacylated Asp-tRNA(Asn) or Glu-tRNA(Gln) in organisms which lack either or both of asparaginyl-tRNA or glutaminyl-tRNA synthetases. The reaction takes place in the presence of glutamine and ATP through an activated phospho-Asp-tRNA(Asn) or phospho-Glu-tRNA(Gln). The protein is Aspartyl/glutamyl-tRNA(Asn/Gln) amidotransferase subunit C of Rhizobium leguminosarum bv. trifolii (strain WSM2304).